We begin with the raw amino-acid sequence, 394 residues long: 1-deoxy-D-xylulose 5-phosphate reductoisomerase (394 aa).

Threonine 14, glycine 15, serine 16, isoleucine 17, glycine 40, asparagine 43, and asparagine 130 together coordinate NADPH. 1-deoxy-D-xylulose 5-phosphate is bound at residue lysine 131. Glutamate 132 contacts NADPH. Aspartate 154 is a binding site for Mn(2+). Residues serine 155, glutamate 156, serine 180, and histidine 203 each coordinate 1-deoxy-D-xylulose 5-phosphate. Glutamate 156 is a Mn(2+) binding site. Glycine 209 serves as a coordination point for NADPH. Serine 216, asparagine 221, lysine 222, and glutamate 225 together coordinate 1-deoxy-D-xylulose 5-phosphate. Glutamate 225 provides a ligand contact to Mn(2+).

It belongs to the DXR family. Mg(2+) is required as a cofactor. Requires Mn(2+) as cofactor.

It carries out the reaction 2-C-methyl-D-erythritol 4-phosphate + NADP(+) = 1-deoxy-D-xylulose 5-phosphate + NADPH + H(+). The protein operates within isoprenoid biosynthesis; isopentenyl diphosphate biosynthesis via DXP pathway; isopentenyl diphosphate from 1-deoxy-D-xylulose 5-phosphate: step 1/6. In terms of biological role, catalyzes the NADPH-dependent rearrangement and reduction of 1-deoxy-D-xylulose-5-phosphate (DXP) to 2-C-methyl-D-erythritol 4-phosphate (MEP). In Corynebacterium efficiens (strain DSM 44549 / YS-314 / AJ 12310 / JCM 11189 / NBRC 100395), this protein is 1-deoxy-D-xylulose 5-phosphate reductoisomerase.